Reading from the N-terminus, the 107-residue chain is Replication initiation control protein YabA (107 aa).

Positions 81, 83, 97, and 100 each coordinate Zn(2+).

It belongs to the YabA family. Homotetramer. Interacts with both DnaA and DnaN, acting as a bridge between these two proteins. It depends on Zn(2+) as a cofactor.

Its subcellular location is the cytoplasm. It is found in the nucleoid. In terms of biological role, involved in control of chromosome replication initiation. Inhibits the cooperative binding of DnaA to the oriC region, thus negatively regulating initiation of chromosome replication. Inhibits the ability of DnaA-ATP to form a helix on DNA; does not disassemble preformed DnaA-DNA helices. Decreases the residence time of DnaA on the chromosome at its binding sites (oriC, replication forks and promoter-binding sites). Tethers DnaA to the replication machinery via the DNA polymerase beta sliding clamp subunit (dnaN). Associates with oriC and other DnaA targets on the chromosome in a DnaA-dependent manner. The sequence is that of Replication initiation control protein YabA from Streptococcus equi subsp. zooepidemicus (strain MGCS10565).